The chain runs to 199 residues: N-(5'-phosphoribosyl)anthranilate isomerase (199 aa).

Belongs to the TrpF family.

It catalyses the reaction N-(5-phospho-beta-D-ribosyl)anthranilate = 1-(2-carboxyphenylamino)-1-deoxy-D-ribulose 5-phosphate. It participates in amino-acid biosynthesis; L-tryptophan biosynthesis; L-tryptophan from chorismate: step 3/5. This is N-(5'-phosphoribosyl)anthranilate isomerase from Streptococcus pneumoniae (strain Hungary19A-6).